The following is a 323-amino-acid chain: Deaminated glutathione amidase (323 aa).

The N-terminal 33 residues, 1–33 (MLGFITRPPHQLLCTGYRLLRTPVLCTQPRPRT), are a transit peptide targeting the mitochondrion. A CN hydrolase domain is found at 42–294 (LPLVAVCQVT…PGLCLARIDL (253 aa)). Glu-82 (proton acceptor) is an active-site residue. Lys-157 serves as the catalytic Proton donor. The Nucleophile role is filled by Cys-199.

It belongs to the carbon-nitrogen hydrolase superfamily. NIT1/NIT2 family. In terms of tissue distribution, expressed in most tissues with higher expression in adult liver and kidney as well as in fetal adrenal gland and skeletal muscle.

Its subcellular location is the mitochondrion. The protein resides in the cytoplasm. It catalyses the reaction N-(4-oxoglutaryl)-L-cysteinylglycine + H2O = L-cysteinylglycine + 2-oxoglutarate. The enzyme catalyses N-(4-carboxy-4-oxobutanoyl)-L-ethylglycylglycine + H2O = N-(2-aminobutanoyl)glycine + 2-oxoglutarate. Functionally, catalyzes the hydrolysis of the amide bond in N-(4-oxoglutarate)-L-cysteinylglycine (deaminated glutathione), a metabolite repair reaction to dispose of the harmful deaminated glutathione. Possesses amidase activity toward deaminated ophthalmate in vitro. Plays a role in cell growth and apoptosis: loss of expression promotes cell growth, resistance to DNA damage stress and increased incidence to NMBA-induced tumors. Has tumor suppressor properties that enhances the apoptotic responsiveness in cancer cells; this effect is additive to the tumor suppressor activity of FHIT. It is also a negative regulator of primary T-cells. The chain is Deaminated glutathione amidase from Mus musculus (Mouse).